Consider the following 180-residue polypeptide: Adenine phosphoribosyltransferase (180 aa).

This sequence belongs to the purine/pyrimidine phosphoribosyltransferase family. In terms of assembly, homodimer.

The protein resides in the cytoplasm. The enzyme catalyses AMP + diphosphate = 5-phospho-alpha-D-ribose 1-diphosphate + adenine. It functions in the pathway purine metabolism; AMP biosynthesis via salvage pathway; AMP from adenine: step 1/1. Functionally, catalyzes a salvage reaction resulting in the formation of AMP, that is energically less costly than de novo synthesis. This chain is Adenine phosphoribosyltransferase, found in Mycolicibacterium smegmatis (strain ATCC 700084 / mc(2)155) (Mycobacterium smegmatis).